The primary structure comprises 553 residues: Methyl-coenzyme M reductase I subunit alpha (553 aa).

Position 150 (Q150) interacts with coenzyme F430. Residues R228, 259 to 260 (KH), and R273 each bind coenzyme B. Position 274 is a 5-methylarginine (R274). 2 residues coordinate coenzyme M: Y335 and Y447.

It belongs to the methyl-coenzyme M reductase alpha subunit family. In terms of assembly, MCR is a hexamer of two alpha, two beta, and two gamma chains, forming a dimer of heterotrimers. Coenzyme F430 is required as a cofactor. Is methylated on C5 of Arg-274 by the methyltransferase MJ0841. This post-translational methylation, despite being not essential in vivo, plays a role for the stability and structural integrity of MCR.

It is found in the cytoplasm. The catalysed reaction is coenzyme B + methyl-coenzyme M = methane + coenzyme M-coenzyme B heterodisulfide. Its pathway is one-carbon metabolism; methyl-coenzyme M reduction; methane from methyl-coenzyme M: step 1/1. In terms of biological role, component of the methyl-coenzyme M reductase (MCR) I that catalyzes the reductive cleavage of methyl-coenzyme M (CoM-S-CH3 or 2-(methylthio)ethanesulfonate) using coenzyme B (CoB or 7-mercaptoheptanoylthreonine phosphate) as reductant which results in the production of methane and the mixed heterodisulfide of CoB and CoM (CoM-S-S-CoB). This is the final step in methanogenesis. In Methanocaldococcus jannaschii (strain ATCC 43067 / DSM 2661 / JAL-1 / JCM 10045 / NBRC 100440) (Methanococcus jannaschii), this protein is Methyl-coenzyme M reductase I subunit alpha (mcrA).